A 1188-amino-acid polypeptide reads, in one-letter code: Integrin alpha-11 (1188 aa).

An N-terminal signal peptide occupies residues 1–22 (MDLPRGLVVAWALSLWPGFTDT). Residues 23 to 1141 (FNMDTRKPRV…ISKQEDWQVP (1119 aa)) lie on the Extracellular side of the membrane. FG-GAP repeat units follow at residues 24-85 (NMDT…NCTK) and 91-151 (VTLS…FSKT). Cysteine 76 and cysteine 83 are disulfide-bonded. 2 N-linked (GlcNAc...) asparagine glycosylation sites follow: asparagine 82 and asparagine 95. 2 disulfides stabilise this stretch: cysteine 121-cysteine 139 and cysteine 129-cysteine 159. Residues 164 to 345 (DIVIVLDGSN…AALKDIVDAL (182 aa)) form the VWFA domain. 5 N-linked (GlcNAc...) asparagine glycosylation sites follow: asparagine 291, asparagine 331, asparagine 358, asparagine 449, and asparagine 462. FG-GAP repeat units follow at residues 355-406 (TNKN…VIPL), 411-461 (LKEF…TMHN), 462-527 (NRSL…LFVY), 528-586 (NGTL…SILK), and 590-650 (QRIT…FEPS). Residues aspartate 488, aspartate 490, aspartate 492, and aspartate 496 each contribute to the Ca(2+) site. N-linked (GlcNAc...) asparagine glycosylation is present at asparagine 528. Residues aspartate 551, asparagine 553, aspartate 555, aspartate 559, aspartate 613, asparagine 615, aspartate 617, and aspartate 621 each coordinate Ca(2+). Asparagine 642 is a glycosylation site (N-linked (GlcNAc...) asparagine). 3 cysteine pairs are disulfide-bonded: cysteine 659–cysteine 668, cysteine 674–cysteine 729, and cysteine 781–cysteine 787. Asparagine 694 is a glycosylation site (N-linked (GlcNAc...) asparagine). Asparagine 857 is a glycosylation site (N-linked (GlcNAc...) asparagine). An intrachain disulfide couples cysteine 881 to cysteine 893. Asparagine 894, asparagine 973, asparagine 1031, asparagine 1039, and asparagine 1059 each carry an N-linked (GlcNAc...) asparagine glycan. The chain crosses the membrane as a helical span at residues 1142 to 1164 (IWIIVGSTLGGLLLLALLVLALW). Topologically, residues 1165–1188 (KLGFFRSARRRREPGLDPTPKVLE) are cytoplasmic.

This sequence belongs to the integrin alpha chain family. Heterodimer of an alpha and a beta subunit. Alpha-11 associates with beta-1. Interacts with RAB21. In terms of tissue distribution, according to PubMed:10464311, highest levels of expression in uterus and heart, intermediate levels in skeletal muscle and intermediate to low levels in pancreas, kidney and placenta. According to PubMed:10486209, also found in brain, colon, lung, small intestine, stomach, testis, salivary glands, thyroid glands and prostate. Very low levels in peripheral blood lymphocytes, fetal brain and fetal liver.

It is found in the membrane. Integrin alpha-11/beta-1 is a receptor for collagen. The protein is Integrin alpha-11 (ITGA11) of Homo sapiens (Human).